The chain runs to 664 residues: Methionine--tRNA ligase (664 aa).

The 'HIGH' region signature appears at 13–23 (PYTNGPCHLGH). Zn(2+) is bound by residues Cys-144, Cys-147, Cys-156, and Cys-160. The 'KMSKS' region signature appears at 327 to 331 (KFSKS). Lys-330 is an ATP binding site. One can recognise a tRNA-binding domain in the interval 566–664 (EFAKVEMKTG…TPVPSGTKIR (99 aa)).

Belongs to the class-I aminoacyl-tRNA synthetase family. MetG type 1 subfamily. As to quaternary structure, homodimer. The cofactor is Zn(2+).

Its subcellular location is the cytoplasm. It catalyses the reaction tRNA(Met) + L-methionine + ATP = L-methionyl-tRNA(Met) + AMP + diphosphate. Is required not only for elongation of protein synthesis but also for the initiation of all mRNA translation through initiator tRNA(fMet) aminoacylation. In Methanospirillum hungatei JF-1 (strain ATCC 27890 / DSM 864 / NBRC 100397 / JF-1), this protein is Methionine--tRNA ligase.